A 178-amino-acid chain; its full sequence is MVGGGMPRGDPLVVGRVIGDVVDPFVRRVSLRVGYASRDVANGCELRPSAIADPPRVEVGGPDMRTFYTLVMVDPDAPSPSDPSLREYLHWLVTDIPATTGVSFGTEVVCYESPRPVLGIHRLVFLLFQQLGRQTVYAPGWRQNFSTRDFAELYNLGLPVAAVYFNCQRESGTGGRRM.

Belongs to the phosphatidylethanolamine-binding protein family. In terms of tissue distribution, expressed in leaves but not in shoot apex.

Functionally, involved in the regulation of vernalization and of flowering time. This is Protein FLOWERING LOCUS T 1 from Brachypodium distachyon (Purple false brome).